Here is a 92-residue protein sequence, read N- to C-terminus: MPSPTRRSSKSRSKSRSRSRSASASPGKAAKRARSKTPRRGKKRARSPSKKARRRSRSTKKTAAKRRKRSSSPKKRRSAGKRRVRAKKKKKK.

Residues 1–92 are disordered; the sequence is MPSPTRRSSK…RVRAKKKKKK (92 aa). 2 stretches are compositionally biased toward basic residues: residues 7 to 19 and 29 to 92; these read RSSKSRSKSRSRS and AAKR…KKKK.

In terms of tissue distribution, sperm.

It is found in the nucleus. It localises to the chromosome. In terms of biological role, involved in nuclear basic protein transition: histones are replaced by spermatid specific proteins which are themselves replaced by protamines in late spermatids. This chain is Sperm-specific protein Phi-1, found in Mytilus edulis (Blue mussel).